The sequence spans 232 residues: uncharacterized protein (232 aa).

Residues 1–18 (MGILKSLFTLGKSFISQA) form the signal peptide. The interval 207-232 (AEAGIGGSNKSSAQDVLARLQRQQGE) is disordered.

Belongs to the PspA/Vipp/IM30 family.

This is an uncharacterized protein from Escherichia coli O6:H1 (strain CFT073 / ATCC 700928 / UPEC).